We begin with the raw amino-acid sequence, 204 residues long: Calexcitin-1 (204 aa).

EF-hand domains lie at 25 to 61 (FLVKKWERIFSLFFDRNASHQVDWGDFYLVVKKVRDI), 75 to 110 (SLAALWEGLCSIADADKDQLISIDEWIGLLKKTDAK), and 115 to 150 (WFKDYQNFMFKLFDVSCDGVMDLAEYTDGMSTYGFD). Ca(2+)-binding residues include D39, N41, S43, Q45, D50, D88, D90, D92, E99, D128, S130, D132, and E139.

The protein is Calexcitin-1 (cex-1) of Caenorhabditis elegans.